The chain runs to 1199 residues: AP-3 complex subunit delta-1 (1199 aa).

A2 is modified (N-acetylalanine). HEAT repeat units lie at residues K34–D71, D142–E179, S180–K216, Y218–R254, K257–N296, S298–K336, S337–L373, E375–Y409, and V521–P558. Disordered regions lie at residues L623–D695 and Y724–P963. S632, S634, and S636 each carry phosphoserine. Composition is skewed to basic and acidic residues over residues E639–R651 and L665–E675. Positions E659–N679 form a coiled coil. A Phosphoserine modification is found at S688. The stretch at D722–K750 forms a coiled coil. The span at R732–S754 shows a compositional bias: basic residues. S754 and S755 each carry phosphoserine. At T758 the chain carries Phosphothreonine. Residues S760, S784, and S825 each carry the phosphoserine modification. Over residues I773–D790 the composition is skewed to acidic residues. The span at P791–K836 shows a compositional bias: basic and acidic residues. Over residues K837–K846 the composition is skewed to basic residues. Residues K843–L863 adopt a coiled-coil conformation. Basic and acidic residues predominate over residues K847–D862. The segment covering T870–A880 has biased composition (pro residues). Positions P894–K916 are enriched in basic and acidic residues. Residues H911–R934 adopt a coiled-coil conformation. Basic residues predominate over residues S917–E928.

This sequence belongs to the adaptor complexes large subunit family. As to quaternary structure, adaptor protein complex 3 (AP-3) is a heterotetramer composed of two large adaptins (delta-type subunit AP3D1 and beta-type subunit AP3B1 or AP3B2), a medium adaptin (mu-type subunit AP3M1 or AP3M2) and a small adaptin (sigma-type subunit APS1 or AP3S2). AP-3 associates with the BLOC-1 complex. Interacts with SLC30A2. Interacts with CLN3 (via dileucine motif); this interaction facilitates lysosomal targeting.

It is found in the cytoplasm. The protein resides in the golgi apparatus membrane. Part of the AP-3 complex, an adaptor-related complex which is not clathrin-associated. The complex is associated with the Golgi region as well as more peripheral structures. It facilitates the budding of vesicles from the Golgi membrane and may be directly involved in trafficking to lysosomes. Involved in process of CD8+ T-cell and NK cell degranulation. In concert with the BLOC-1 complex, AP-3 is required to target cargos into vesicles assembled at cell bodies for delivery into neurites and nerve terminals. In Mus musculus (Mouse), this protein is AP-3 complex subunit delta-1 (Ap3d1).